The primary structure comprises 121 residues: Basic phospholipase A2 homolog GodMT-II (121 aa).

Cystine bridges form between Cys-26–Cys-115, Cys-28–Cys-44, Cys-43–Cys-95, Cys-49–Cys-121, Cys-50–Cys-88, Cys-57–Cys-81, and Cys-75–Cys-86. The interval 105–117 is important for membrane-damaging activities in eukaryotes and bacteria; heparin-binding; that stretch reads KNYKIYPKPLCKK.

The protein belongs to the phospholipase A2 family. Group II subfamily. K49 sub-subfamily. In terms of assembly, monomer. Expressed by the venom gland.

The protein resides in the secreted. In terms of biological role, snake venom phospholipase A2 homolog that lacks enzymatic activity but shows high myotoxic activities. In vivo, induces a mild edema when subcutaneously injected into mice foot pad. This is Basic phospholipase A2 homolog GodMT-II from Cerrophidion godmani (Porthidium godmani).